A 249-amino-acid chain; its full sequence is tRNA pseudouridine synthase A (249 aa).

D53 acts as the Nucleophile in catalysis. A substrate-binding site is contributed by Y111.

Belongs to the tRNA pseudouridine synthase TruA family. As to quaternary structure, homodimer.

It carries out the reaction uridine(38/39/40) in tRNA = pseudouridine(38/39/40) in tRNA. Its function is as follows. Formation of pseudouridine at positions 38, 39 and 40 in the anticodon stem and loop of transfer RNAs. In Streptococcus suis (strain 05ZYH33), this protein is tRNA pseudouridine synthase A.